The following is a 278-amino-acid chain: Large ribosomal subunit protein uL2 (278 aa).

Residues 224 to 278 (VAMNPVDHPHGGGEGRTSGGRNPVTPWGVPTKGKKTRSNKRTDTFILSSRHNRKK) are disordered.

Belongs to the universal ribosomal protein uL2 family. As to quaternary structure, part of the 50S ribosomal subunit. Forms a bridge to the 30S subunit in the 70S ribosome.

Functionally, one of the primary rRNA binding proteins. Required for association of the 30S and 50S subunits to form the 70S ribosome, for tRNA binding and peptide bond formation. It has been suggested to have peptidyltransferase activity; this is somewhat controversial. Makes several contacts with the 16S rRNA in the 70S ribosome. This chain is Large ribosomal subunit protein uL2, found in Methylorubrum extorquens (strain CM4 / NCIMB 13688) (Methylobacterium extorquens).